A 419-amino-acid polypeptide reads, in one-letter code: 3-isopropylmalate dehydratase large subunit (419 aa).

Positions 300, 360, and 363 each coordinate [4Fe-4S] cluster.

It belongs to the aconitase/IPM isomerase family. LeuC type 2 subfamily. As to quaternary structure, heterodimer of LeuC and LeuD. Requires [4Fe-4S] cluster as cofactor.

The catalysed reaction is (2R,3S)-3-isopropylmalate = (2S)-2-isopropylmalate. It functions in the pathway amino-acid biosynthesis; L-leucine biosynthesis; L-leucine from 3-methyl-2-oxobutanoate: step 2/4. Functionally, catalyzes the isomerization between 2-isopropylmalate and 3-isopropylmalate, via the formation of 2-isopropylmaleate. The chain is 3-isopropylmalate dehydratase large subunit from Desulfatibacillum aliphaticivorans.